Consider the following 422-residue polypeptide: Serine protease HTRA2, mitochondrial (422 aa).

The N-terminal 17 residues, 1–17 (MALRGSHRLEVIFKRCI), are a transit peptide targeting the mitochondrion. The propeptide occupies 18–74 (ASPVLHSQAGNRRSSQLAIKGVDPNSNGNSGQYQQNGEHKEKGWRRLVRFFVPFSLG). The segment at 28 to 55 (NRRSSQLAIKGVDPNSNGNSGQYQQNGE) is disordered. Residues 42–53 (NSNGNSGQYQQN) show a composition bias toward low complexity. A helical membrane pass occupies residues 64-82 (LVRFFVPFSLGAAVSAAII). 2 consecutive short sequence motifs (IAP-binding) follow at residues 75 to 78 (AAVS) and 94 to 97 (SKMT). A serine protease region spans residues 139–302 (SNGSGFIIEQ…IPIDYVKVFL (164 aa)). Residues His157, Asp189, and Ser266 each act as charge relay system in the active site. The PDZ domain maps to 325–410 (MGITMLTLTP…TLDIVILRGV (86 aa)).

The protein belongs to the peptidase S1C family. Interacts with th/DIAP1 (via BIR 2 domain).

It is found in the mitochondrion intermembrane space. The protein localises to the mitochondrion membrane. The catalysed reaction is Cleavage of non-polar aliphatic amino-acids at the P1 position, with a preference for Val, Ile and Met. At the P2 and P3 positions, Arg is selected most strongly with a secondary preference for other hydrophilic residues.. In terms of biological role, serine protease that shows proteolytic activity against a non-specific substrate beta-casein. Promotes or induces cell death either by direct binding to and inhibition of BIRC proteins (also called inhibitor of apoptosis proteins, IAPs), leading to an increase in caspase activity, or by a BIRC inhibition-independent, caspase-independent and serine protease activity-dependent mechanism. Can antagonize antiapoptotic activity of th/Diap1 by directly inducing the degradation of th/Diap1. In Drosophila sechellia (Fruit fly), this protein is Serine protease HTRA2, mitochondrial.